A 345-amino-acid chain; its full sequence is Holliday junction branch migration complex subunit RuvB (345 aa).

A large ATPase domain (RuvB-L) region spans residues 1–182; that stretch reads MQRLVEVESV…FGMHFRMQFY (182 aa). Residues L21, R22, G63, K66, T67, T68, 129 to 131, R172, Y182, and R219 each bind ATP; that span reads EDY. Mg(2+) is bound at residue T67. Positions 183–253 are small ATPAse domain (RuvB-S); that stretch reads TEIELAKIIQ…RCKYALDELG (71 aa). The interval 256–345 is head domain (RuvB-H); sequence ESGFDEMDIN…EDDLTQGKLF (90 aa). DNA contacts are provided by R310 and R315.

The protein belongs to the RuvB family. As to quaternary structure, homohexamer. Forms an RuvA(8)-RuvB(12)-Holliday junction (HJ) complex. HJ DNA is sandwiched between 2 RuvA tetramers; dsDNA enters through RuvA and exits via RuvB. An RuvB hexamer assembles on each DNA strand where it exits the tetramer. Each RuvB hexamer is contacted by two RuvA subunits (via domain III) on 2 adjacent RuvB subunits; this complex drives branch migration. In the full resolvosome a probable DNA-RuvA(4)-RuvB(12)-RuvC(2) complex forms which resolves the HJ.

It is found in the cytoplasm. The catalysed reaction is ATP + H2O = ADP + phosphate + H(+). Its function is as follows. The RuvA-RuvB-RuvC complex processes Holliday junction (HJ) DNA during genetic recombination and DNA repair, while the RuvA-RuvB complex plays an important role in the rescue of blocked DNA replication forks via replication fork reversal (RFR). RuvA specifically binds to HJ cruciform DNA, conferring on it an open structure. The RuvB hexamer acts as an ATP-dependent pump, pulling dsDNA into and through the RuvAB complex. RuvB forms 2 homohexamers on either side of HJ DNA bound by 1 or 2 RuvA tetramers; 4 subunits per hexamer contact DNA at a time. Coordinated motions by a converter formed by DNA-disengaged RuvB subunits stimulates ATP hydrolysis and nucleotide exchange. Immobilization of the converter enables RuvB to convert the ATP-contained energy into a lever motion, pulling 2 nucleotides of DNA out of the RuvA tetramer per ATP hydrolyzed, thus driving DNA branch migration. The RuvB motors rotate together with the DNA substrate, which together with the progressing nucleotide cycle form the mechanistic basis for DNA recombination by continuous HJ branch migration. Branch migration allows RuvC to scan DNA until it finds its consensus sequence, where it cleaves and resolves cruciform DNA. The polypeptide is Holliday junction branch migration complex subunit RuvB (Aliarcobacter butzleri (strain RM4018) (Arcobacter butzleri)).